Here is a 503-residue protein sequence, read N- to C-terminus: ATP synthase subunit alpha (503 aa).

169 to 176 is an ATP binding site; that stretch reads GDRKTGKT.

The protein belongs to the ATPase alpha/beta chains family. F-type ATPases have 2 components, CF(1) - the catalytic core - and CF(0) - the membrane proton channel. CF(1) has five subunits: alpha(3), beta(3), gamma(1), delta(1), epsilon(1). CF(0) has three main subunits: a(1), b(2) and c(9-12). The alpha and beta chains form an alternating ring which encloses part of the gamma chain. CF(1) is attached to CF(0) by a central stalk formed by the gamma and epsilon chains, while a peripheral stalk is formed by the delta and b chains.

It localises to the cell membrane. The enzyme catalyses ATP + H2O + 4 H(+)(in) = ADP + phosphate + 5 H(+)(out). In terms of biological role, produces ATP from ADP in the presence of a proton gradient across the membrane. The alpha chain is a regulatory subunit. This Lactobacillus helveticus (strain DPC 4571) protein is ATP synthase subunit alpha.